Consider the following 92-residue polypeptide: Small ribosomal subunit protein uS19 (92 aa).

It belongs to the universal ribosomal protein uS19 family.

Its function is as follows. Protein S19 forms a complex with S13 that binds strongly to the 16S ribosomal RNA. This Rickettsia africae (strain ESF-5) protein is Small ribosomal subunit protein uS19.